The chain runs to 752 residues: Palmitoyltransferase AKR1 (752 aa).

Disordered regions lie at residues 1 to 21 (MTAE…KSDY) and 49 to 68 (ASSE…LGSV). Topologically, residues 1–318 (MTAEEVDKES…FPLPQYFSAS (318 aa)) are cytoplasmic. Composition is skewed to basic and acidic residues over residues 9 to 21 (ESDP…KSDY) and 51 to 68 (SELK…LGSV). 6 ANK repeats span residues 72-102 (PILE…DLSN), 108-137 (ERVS…EVNF), 142-171 (LDAT…DPNI), 175-208 (QGYN…DVDQ), 212-241 (HQRT…DVKN), and 245-274 (AGFT…DFFQ). Residues 319 to 339 (TGKMLTFFLPWVLIPLVFYIF) form a helical membrane-spanning segment. At 340-341 (SK) the chain is on the lumenal side. A helical transmembrane segment spans residues 342-362 (ITFFIALLINTIVLVISGLVL). Topologically, residues 363–380 (SRLVVPSYLLSKRHPILN) are cytoplasmic. The chain crosses the membrane as a helical span at residues 381-401 (SPLLAGILSGTIAIAFFIWFT). Residues 402–412 (KISILTFTEKP) lie on the Lumenal side of the membrane. Residues 413-433 (VGNIIMLGFFIGLITLFIGLM) traverse the membrane as a helical segment. Topologically, residues 434–509 (KSDPGYIPGT…YNQIGLLNHK (76 aa)) are cytoplasmic. A DHHC domain is found at 466–516 (HFCVHTWIRIPLRSKYDRDSACLISAFDHFCPWVYNQIGLLNHKLFYMFVV). Cys496 functions as the S-palmitoyl cysteine intermediate in the catalytic mechanism. The chain crosses the membrane as a helical span at residues 510-530 (LFYMFVVLLEISVWWFLPLMM). Over 531 to 567 (EYFDELEDYLENRKGKHFGDCHFLGDEDLCFGLHHDT) the chain is Lumenal. Residues 568-588 (FNFLLLCWVIFQAFWVLCLIA) form a helical membrane-spanning segment. At 589–752 (VQTVQMLKGV…TLPNATEELV (164 aa)) the chain is on the cytoplasmic side.

The protein belongs to the DHHC palmitoyltransferase family. AKR/ZDHHC17 subfamily.

Its subcellular location is the early endosome membrane. It is found in the golgi apparatus membrane. The enzyme catalyses L-cysteinyl-[protein] + hexadecanoyl-CoA = S-hexadecanoyl-L-cysteinyl-[protein] + CoA. In terms of biological role, palmitoyltransferase specific for casein kinase 1. The sequence is that of Palmitoyltransferase AKR1 (AKR1) from Kluyveromyces lactis (strain ATCC 8585 / CBS 2359 / DSM 70799 / NBRC 1267 / NRRL Y-1140 / WM37) (Yeast).